The sequence spans 1033 residues: Tyrosine-protein kinase-like otk (1033 aa).

The signal sequence occupies residues 1–22 (MTARMISIYGLVLASMMASVLA). Residues 23–581 (SSSRFQRLPQ…GGDGFLVTRA (559 aa)) are Extracellular-facing. Ig-like C2-type domains follow at residues 25 to 114 (SRFQ…AKLS), 113 to 199 (LSVI…RVMS), 251 to 365 (PEDL…VPVS), 368 to 463 (PGVL…VAIN), and 468 to 558 (PKFS…VQLI). Asn-39 carries N-linked (GlcNAc...) asparagine glycosylation. Disulfide bonds link Cys-46–Cys-95, Cys-137–Cys-188, Cys-276–Cys-354, and Cys-399–Cys-447. 7 N-linked (GlcNAc...) asparagine glycosylation sites follow: Asn-336, Asn-417, Asn-429, Asn-444, Asn-457, Asn-512, and Asn-524. A disulfide bond links Cys-490 and Cys-542. Residues 582-602 (VLITMTVALAYIVLVVGLMLW) form a helical membrane-spanning segment. At 603-1033 (CRYRRQARKA…LSKAMQSAEK (431 aa)) the chain is on the cytoplasmic side. Disordered stretches follow at residues 617-679 (LSTK…KKSA) and 718-760 (SPSD…KTSM). The segment covering 655–673 (KSSGDAQKSDDTACSQQSR) has biased composition (polar residues). Residue Ser-678 is modified to Phosphoserine. The Protein kinase; inactive domain maps to 692–1028 (LSELIQIGRG…QLGAALSKAM (337 aa)). Positions 720–731 (SDKDADTEKQHS) are enriched in basic and acidic residues.

This sequence belongs to the protein kinase superfamily. Tyr protein kinase family. Insulin receptor subfamily. As to quaternary structure, interacts with plexA; component of a receptor complex that mediates the repulsive signaling in response to Semaphorin ligands.

It is found in the cell membrane. Its function is as follows. Acts as a calcium-dependent, homophilic cell adhesion molecule that regulates neural recognition during the development of the nervous system. Component of the repulsive Plexin signaling response to regulate motor axon guidance at the embryonic stage. Also component of a receptor complex that is required in the adult visual system to innervate the lamina layer; specific targeting of R1-R6 axons. The sequence is that of Tyrosine-protein kinase-like otk from Drosophila yakuba (Fruit fly).